The sequence spans 505 residues: Glucan endo-1,3-beta-glucosidase 4 (505 aa).

The N-terminal stretch at 1–23 is a signal peptide; that stretch reads MLLPRWFAEALLLLLSILACSNA. 2 N-linked (GlcNAc...) asparagine glycosylation sites follow: N70 and N110. Residue E119 is the Proton donor of the active site. 2 N-linked (GlcNAc...) asparagine glycosylation sites follow: N178 and N256. E266 serves as the catalytic Nucleophile. N-linked (GlcNAc...) asparagine glycosylation is found at N298, N338, and N357. A disulfide bridge connects residues C363 and C426. N453 is a glycosylation site (N-linked (GlcNAc...) asparagine). A474 is lipidated: GPI-anchor amidated alanine. A propeptide spans 475-505 (removed in mature form); that stretch reads NARIIFSYHLPILAPLALTLLQLLLQHDRLL.

This sequence belongs to the glycosyl hydrolase 17 family. Contains two additional disulfide bonds.

The protein localises to the cell membrane. It catalyses the reaction Hydrolysis of (1-&gt;3)-beta-D-glucosidic linkages in (1-&gt;3)-beta-D-glucans.. In Arabidopsis thaliana (Mouse-ear cress), this protein is Glucan endo-1,3-beta-glucosidase 4.